The sequence spans 82 residues: ATP synthase subunit c (82 aa).

The next 2 helical transmembrane spans lie at 3–23 (PLIA…ASLG) and 57–77 (LAFM…LLFA).

F-type ATPases have 2 components, F(1) - the catalytic core - and F(0) - the membrane proton channel. F(1) has five subunits: alpha(3), beta(3), gamma(1), delta(1), epsilon(1). F(0) has four main subunits: a(1), b(1), b'(1) and c(10-14). The alpha and beta chains form an alternating ring which encloses part of the gamma chain. F(1) is attached to F(0) by a central stalk formed by the gamma and epsilon chains, while a peripheral stalk is formed by the delta, b and b' chains.

Its subcellular location is the cellular thylakoid membrane. Its activity is regulated as follows. Inhibited by dicyclohexylcarbodiimide. In terms of biological role, f(1)F(0) ATP synthase produces ATP from ADP in the presence of a proton or sodium gradient. F-type ATPases consist of two structural domains, F(1) containing the extramembraneous catalytic core and F(0) containing the membrane proton channel, linked together by a central stalk and a peripheral stalk. During catalysis, ATP synthesis in the catalytic domain of F(1) is coupled via a rotary mechanism of the central stalk subunits to proton translocation. Key component of the F(0) channel; it plays a direct role in translocation across the membrane. A homomeric c-ring of between 10-14 subunits forms the central stalk rotor element with the F(1) delta and epsilon subunits. Its function is as follows. The complex from the organism is particularly stable to disruption and remains functional after 6 hrs at 55 degrees Celsius. This chain is ATP synthase subunit c (atpE), found in Thermosynechococcus vestitus (strain NIES-2133 / IAM M-273 / BP-1).